Here is a 322-residue protein sequence, read N- to C-terminus: Porphobilinogen deaminase (322 aa).

Cys-254 carries the S-(dipyrrolylmethanemethyl)cysteine modification.

It belongs to the HMBS family. Monomer. Dipyrromethane is required as a cofactor.

The enzyme catalyses 4 porphobilinogen + H2O = hydroxymethylbilane + 4 NH4(+). It participates in porphyrin-containing compound metabolism; protoporphyrin-IX biosynthesis; coproporphyrinogen-III from 5-aminolevulinate: step 2/4. Functionally, tetrapolymerization of the monopyrrole PBG into the hydroxymethylbilane pre-uroporphyrinogen in several discrete steps. This is Porphobilinogen deaminase from Methylococcus capsulatus (strain ATCC 33009 / NCIMB 11132 / Bath).